A 212-amino-acid polypeptide reads, in one-letter code: Imidazole glycerol phosphate synthase subunit HisH (212 aa).

A Glutamine amidotransferase type-1 domain is found at 4 to 210; sequence NIGIIDYGMG…LKWLHEKNSD (207 aa). Cysteine 82 serves as the catalytic Nucleophile. Active-site residues include histidine 185 and glutamate 187.

As to quaternary structure, heterodimer of HisH and HisF.

The protein resides in the cytoplasm. The catalysed reaction is 5-[(5-phospho-1-deoxy-D-ribulos-1-ylimino)methylamino]-1-(5-phospho-beta-D-ribosyl)imidazole-4-carboxamide + L-glutamine = D-erythro-1-(imidazol-4-yl)glycerol 3-phosphate + 5-amino-1-(5-phospho-beta-D-ribosyl)imidazole-4-carboxamide + L-glutamate + H(+). It catalyses the reaction L-glutamine + H2O = L-glutamate + NH4(+). The protein operates within amino-acid biosynthesis; L-histidine biosynthesis; L-histidine from 5-phospho-alpha-D-ribose 1-diphosphate: step 5/9. In terms of biological role, IGPS catalyzes the conversion of PRFAR and glutamine to IGP, AICAR and glutamate. The HisH subunit catalyzes the hydrolysis of glutamine to glutamate and ammonia as part of the synthesis of IGP and AICAR. The resulting ammonia molecule is channeled to the active site of HisF. This chain is Imidazole glycerol phosphate synthase subunit HisH, found in Prochlorococcus marinus (strain MIT 9211).